A 336-amino-acid chain; its full sequence is DNA-directed RNA polymerase subunit alpha (336 aa).

Residues 1–232 (MIQKNWQELI…DQLGLFVNFE (232 aa)) form an alpha N-terminal domain (alpha-NTD) region. Residues 248 to 336 (FNPALLKKVD…ELAKRYEDQY (89 aa)) are alpha C-terminal domain (alpha-CTD).

Belongs to the RNA polymerase alpha chain family. In terms of assembly, homodimer. The RNAP catalytic core consists of 2 alpha, 1 beta, 1 beta' and 1 omega subunit. When a sigma factor is associated with the core the holoenzyme is formed, which can initiate transcription.

It carries out the reaction RNA(n) + a ribonucleoside 5'-triphosphate = RNA(n+1) + diphosphate. In terms of biological role, DNA-dependent RNA polymerase catalyzes the transcription of DNA into RNA using the four ribonucleoside triphosphates as substrates. This chain is DNA-directed RNA polymerase subunit alpha, found in Chelativorans sp. (strain BNC1).